Here is an 887-residue protein sequence, read N- to C-terminus: Multiple RNA-binding domain-containing protein 1 (887 aa).

An RRM 1 domain is found at 2-94 (SRIIVKGLPV…SKIEVSMAKS (93 aa)). 3 disordered regions span residues 121-143 (KLLQ…NIDD), 203-276 (KEEN…RNLA), and 297-336 (SEAE…DEEL). Serine 220 and serine 264 each carry phosphoserine. Residues 264–276 (SDEKENEKRRNLA) are compositionally biased toward basic and acidic residues. Positions 306 to 315 (SSYATEQNES) are enriched in polar residues. The segment covering 316 to 325 (LDTKKEEQPE) has biased composition (basic and acidic residues). RRM domains lie at 345–423 (GRLF…PGEE), 532–604 (KVIL…RGPK), 663–746 (VSIF…LSHR), and 763–840 (GKII…YAEE). The disordered stretch occupies residues 864 to 887 (EMAALRNGGGRKKLDVDDEENEGF).

Belongs to the RRM MRD1 family. In terms of assembly, interacts with NOP1. Binds to the 35S pre-rRNA and the U3 snoRNA.

The protein localises to the nucleus. Its function is as follows. Involved in pre-rRNA processing. Required for maintaining steady-state levels of 40S ribosomal subunit. Required for the initial processing of pre-rRNA at the A0 to A2 sites, leading to the processing of the 23S pre-rRNA intermediate to the 18S rRNA. In Saccharomyces cerevisiae (strain ATCC 204508 / S288c) (Baker's yeast), this protein is Multiple RNA-binding domain-containing protein 1 (MRD1).